The following is a 649-amino-acid chain: Protein PSK SIMULATOR 3 (649 aa).

A lipid anchor (N-myristoyl glycine) is attached at glycine 2. Residues 18–43 (SGSSVADDGREPDFGHSQPNGQTSLI) form a disordered region.

The protein localises to the nucleus. Functionally, promotes plant growth, especially at the vegetative stage, probably via the regulation of phytosulfokine (PSK) signaling; PSK are peptide phytohormones acting as growth factors. Together with PSI2 and PSI3, required during vegetative growth and reproduction. May also have a function in carbohydrate metabolism. This chain is Protein PSK SIMULATOR 3, found in Arabidopsis thaliana (Mouse-ear cress).